The primary structure comprises 273 residues: MNNNSKIINIYVNDNQKSLETALIVKDKLEQKGFKPTFDFDENALINLCIGGDGAFLRAVHKYEFSTIPFVGINTGHLGFYQEILIPNIDKFISDLINENYGIEKISLLESKTAIRNSSKTYTHKALNEFVVKSDDSSIVYLDVYIDDNHLESFAGDGIIVSTPSGSTAYNFSAGGSVLYHGLDGFQVTPLAPINSKAYRSLLNSLVVPSKSNVTLYFRDHNFDRKSSIVLADGLNRSYDNVDYVNFTYSDQYINKLVFLKDWYWLNIKDKFL.

The active-site Proton acceptor is the aspartate 53. NAD(+) contacts are provided by residues 53–54, arginine 58, 128–129, aspartate 157, 168–173, and alanine 192; these read DG, NE, and TAYNFS.

This sequence belongs to the NAD kinase family. A divalent metal cation serves as cofactor.

It localises to the cytoplasm. The enzyme catalyses NAD(+) + ATP = ADP + NADP(+) + H(+). Involved in the regulation of the intracellular balance of NAD and NADP, and is a key enzyme in the biosynthesis of NADP. Catalyzes specifically the phosphorylation on 2'-hydroxyl of the adenosine moiety of NAD to yield NADP. This Finegoldia magna (strain ATCC 29328 / DSM 20472 / WAL 2508) (Peptostreptococcus magnus) protein is NAD kinase.